Here is a 325-residue protein sequence, read N- to C-terminus: Foldase protein PrsA (325 aa).

A signal peptide spans Met-1–Ala-20. The N-palmitoyl cysteine moiety is linked to residue Cys-21. Cys-21 carries S-diacylglycerol cysteine lipidation. A PpiC domain is found at Glu-139–Lys-245. Disordered stretches follow at residues Glu-159–Lys-200 and Pro-303–Ser-325.

It belongs to the PrsA family.

Its subcellular location is the cell membrane. The enzyme catalyses [protein]-peptidylproline (omega=180) = [protein]-peptidylproline (omega=0). In terms of biological role, plays a major role in protein secretion by helping the post-translocational extracellular folding of several secreted proteins. This Staphylococcus epidermidis (strain ATCC 35984 / DSM 28319 / BCRC 17069 / CCUG 31568 / BM 3577 / RP62A) protein is Foldase protein PrsA.